The following is a 728-amino-acid chain: MSSRIDRDVINALIAGHFADPFSVLGMHQTQAGLEVRALLPDATDVWVIEPKTGRKVGKLECLDARGFFCGVLPRRKNFFRYQLAVVWHGQQNLIDDPYRFGPLIQEMDAWLLSEGTHLRPYETLGAHADTMDGVTGTRFSVWAPNARRVSVVGQFNYWDGRRHPMRLRKESGIWELFIPGAHNGQLYKFELLDANGNLRIKADPYAFEAQMRPETASMICGLPEKVTQSEERQKANQFDAPISIYEVHLGSWRRHTDNNFWLSYRELADQLVPYAKWMGFTHLELLPVNEHPFDGSWGYQPTGLYAPTRRFGTRDDFRYFINAAHAAGLNVILDWVPGHFPSDDFSLAEFDGTHLYEHSDPREGYHQDWNTLIYNYGRREVSNYLVGNALYWMERFGIDALRVDAVASMIYRDYSRKEGEWIPNEFGGRENLEAIEFLRNTNRIIGEQVPGAVSMAEESTDFSGVTRPPETGGLGFWFKWNLGWMHDTLDYMKLDPVYRQYHHDKLTFGMLYNHTENFVLPLSHDEVVHGKKSILDRMPGDAWQKFANLRAYYGWMWAFPGKKLLFMGNEFAQGREWNHDASLDWHLLEGGDNWHHGVQRLVRDLNHTYRHHKALHELDFDAYGFEWLVVDDNERSVLIFVRRDKAGNEIIVASNFTPVPRYDYRFGVNQPGRWREILNTDSMHYHGSNTGNGGVVHSDEIESHGRQHSLRLTLPPLATIWLMREGE.

Residue aspartate 405 is the Nucleophile of the active site. Residue glutamate 458 is the Proton donor of the active site.

This sequence belongs to the glycosyl hydrolase 13 family. GlgB subfamily. Monomer.

It carries out the reaction Transfers a segment of a (1-&gt;4)-alpha-D-glucan chain to a primary hydroxy group in a similar glucan chain.. Its pathway is glycan biosynthesis; glycogen biosynthesis. Its function is as follows. Catalyzes the formation of the alpha-1,6-glucosidic linkages in glycogen by scission of a 1,4-alpha-linked oligosaccharide from growing alpha-1,4-glucan chains and the subsequent attachment of the oligosaccharide to the alpha-1,6 position. The chain is 1,4-alpha-glucan branching enzyme GlgB from Salmonella arizonae (strain ATCC BAA-731 / CDC346-86 / RSK2980).